A 193-amino-acid chain; its full sequence is ATP synthase subunit b 1 (193 aa).

The disordered stretch occupies residues 9–28 (QEADHTAGETHTETGVAEGG). Residues 10–20 (EADHTAGETHT) are compositionally biased toward basic and acidic residues. The helical transmembrane segment at 40-59 (TYPSQLLWLAITFGLFYLFL) threads the bilayer.

It belongs to the ATPase B chain family. F-type ATPases have 2 components, F(1) - the catalytic core - and F(0) - the membrane proton channel. F(1) has five subunits: alpha(3), beta(3), gamma(1), delta(1), epsilon(1). F(0) has three main subunits: a(1), b(2) and c(10-14). The alpha and beta chains form an alternating ring which encloses part of the gamma chain. F(1) is attached to F(0) by a central stalk formed by the gamma and epsilon chains, while a peripheral stalk is formed by the delta and b chains.

Its subcellular location is the cell inner membrane. Its function is as follows. F(1)F(0) ATP synthase produces ATP from ADP in the presence of a proton or sodium gradient. F-type ATPases consist of two structural domains, F(1) containing the extramembraneous catalytic core and F(0) containing the membrane proton channel, linked together by a central stalk and a peripheral stalk. During catalysis, ATP synthesis in the catalytic domain of F(1) is coupled via a rotary mechanism of the central stalk subunits to proton translocation. In terms of biological role, component of the F(0) channel, it forms part of the peripheral stalk, linking F(1) to F(0). The chain is ATP synthase subunit b 1 from Chelativorans sp. (strain BNC1).